The following is a 128-amino-acid chain: Tachykinin-4 (128 aa).

The signal sequence occupies residues 1-16 (MLPLLALLLLIGPSVC). Positions 17–54 (TTAGDREELAFGAEAESWVTVNLKGIPVPSIELKLQEL) are excised as a propeptide. Met-66 is subject to Methionine amide. Residues 69–128 (RVGGYQLGRIVQDLLGTRGLSIEGTCRQAASQQRARPGAVTRESLQSREEDEAPLTTSNV) constitute a propeptide that is removed on maturation. A disordered region spans residues 96–128 (QAASQQRARPGAVTRESLQSREEDEAPLTTSNV).

The protein belongs to the tachykinin family. Expressed in hematopoietic cells with highest levels in pre- and pro-B cells but not in later developmental stages. Also detected in uterus, skeletal muscle, brain, spleen, stomach, skin and lactating mammary gland and in cells of myeloid lineage including dendritic and microglial cells and macrophages. In uterus, highest expression is observed in non-pregnant diestrus mice and in day 5 pregnant mice. Compared with mice in diestrus, decreases 2.6-fold in uteri from non-pregnant mice in estrus and 10.2-fold in day 17 pregnant mice. Detected at sites of chronic inflammation such as granulomas.

The protein resides in the secreted. In terms of biological role, tachykinins are active peptides which excite neurons, evoke behavioral responses, are potent vasodilators and secretagogues, and contract (directly or indirectly) many smooth muscles. Hemokinin induces plasma extravasation, mast cell degranulation, muscle contraction, salivary secretion and scratching behavior. Increases sperm motility. Induces potent analgesic effects and may play a role in pain modulation. Promotes survival of bone marrow B lineage cells and of cultured LPS-stimulated pre-B cells and may act as an autocrine factor required for B-cell survival and proliferation. Lowers systemic arterial pressure following intravenous injection. Induces interferon-gamma production and may play a role in the inflammatory response. Shows potent affinity and specificity for the NK-1 receptor. The chain is Tachykinin-4 from Mus musculus (Mouse).